The sequence spans 261 residues: Pimeloyl-[acyl-carrier protein] methyl ester esterase (261 aa).

Positions 16 to 241 (LVLLHGWGLN…HAAHAPFISH (226 aa)) constitute an AB hydrolase-1 domain. Substrate is bound by residues Trp-22, 82-83 (SL), and 143-147 (FLALQ). The active-site Nucleophile is Ser-82. Active-site residues include Asp-207 and His-235. Substrate is bound at residue His-235.

The protein belongs to the AB hydrolase superfamily. Carboxylesterase BioH family. Monomer.

The protein resides in the cytoplasm. It catalyses the reaction 6-carboxyhexanoyl-[ACP] methyl ester + H2O = 6-carboxyhexanoyl-[ACP] + methanol + H(+). It functions in the pathway cofactor biosynthesis; biotin biosynthesis. Its function is as follows. The physiological role of BioH is to remove the methyl group introduced by BioC when the pimeloyl moiety is complete. It allows to synthesize pimeloyl-ACP via the fatty acid synthetic pathway through the hydrolysis of the ester bonds of pimeloyl-ACP esters. This chain is Pimeloyl-[acyl-carrier protein] methyl ester esterase, found in Photorhabdus laumondii subsp. laumondii (strain DSM 15139 / CIP 105565 / TT01) (Photorhabdus luminescens subsp. laumondii).